Consider the following 746-residue polypeptide: Zinc finger protein 366 (746 aa).

The disordered stretch occupies residues 1 to 64 (MQKAMKMVKD…FRYEPSPGDL (64 aa)). C2H2-type zinc fingers lie at residues 250–272 (WQCP…ILGH), 278–300 (HACS…MLTH), 306–328 (HKCQ…MMQH), 334–356 (HNCR…EAKH), 362–384 (NICV…LTTH), 390–412 (YNCS…MMKH), 418–440 (YICS…SLTH), 446–468 (HKCG…VLIH), 474–496 (YQCH…MIVH), 502–524 (FKCK…LHLH), and 530–553 (FKCL…KVKH). The interaction with NRIP1 stretch occupies residues 452–746 (GREFTLLANM…MEKQAVLLGI (295 aa)). The short motif at 587–591 (PFDLS) is the PXDLS element. Residues 587–689 (PFDLSQKRSA…DHEGSDIDCE (103 aa)) are disordered. Acidic residues predominate over residues 613–627 (CQEEEEEAGEEDNCY). Over residues 675-689 (EDRSEDHEGSDIDCE) the composition is skewed to basic and acidic residues.

As to quaternary structure, interacts with ESR1 and NRIP1. Interacts (via PXDLS motif) with CTBP1. Expressed in immature and mature dendritic cells (DCs).

The protein localises to the nucleus. Has transcriptional repression activity. Acts as a corepressor of ESR1; the function seems to involve CTBP1 and histone deacetylases. The protein is Zinc finger protein 366 of Mus musculus (Mouse).